The chain runs to 122 residues: Small ribosomal subunit protein uS12c (122 aa).

The protein belongs to the universal ribosomal protein uS12 family. As to quaternary structure, part of the 30S ribosomal subunit.

The protein resides in the plastid. It is found in the chloroplast. In terms of biological role, with S4 and S5 plays an important role in translational accuracy. Located at the interface of the 30S and 50S subunits. This Illicium oligandrum (Star anise) protein is Small ribosomal subunit protein uS12c (rps12).